A 184-amino-acid polypeptide reads, in one-letter code: Type-1 fimbrial protein, A chain (184 aa).

Positions 1–22 (MKHKLMTSTIASLMFVAGAAVA) are cleaved as a signal peptide. Cysteines 46 and 86 form a disulfide.

It belongs to the fimbrial protein family.

It is found in the fimbrium. In terms of biological role, fimbriae (also called pili), polar filaments radiating from the surface of the bacterium to a length of 0.5-1.5 micrometers and numbering 100-300 per cell, enable bacteria to colonize the epithelium of specific host organs. The sequence is that of Type-1 fimbrial protein, A chain (fimA) from Salmonella typhi.